The primary structure comprises 154 residues: MGLSEGEWQLVLNVWGKVEADLAGHGQDVLIRLFKGHPETLEKFDKFKHLKTEAEMKASEDLKKHGNTVLTALGGILKKKGHHDAELKPLAQSHATKHKIPIKYLEFISEAIIHVLHSRHPAEFGADAQGAMNKALELFRKDIATKYKELGFHG.

Residues 2–148 (GLSEGEWQLV…FRKDIATKYK (147 aa)) form the Globin domain. Ser-4 carries the post-translational modification Phosphoserine. Residue His-65 participates in nitrite binding. His-65 contacts O2. Thr-68 is subject to Phosphothreonine. His-94 is a heme b binding site.

The protein belongs to the globin family. As to quaternary structure, monomeric.

The protein resides in the cytoplasm. It is found in the sarcoplasm. The enzyme catalyses Fe(III)-heme b-[protein] + nitric oxide + H2O = Fe(II)-heme b-[protein] + nitrite + 2 H(+). It catalyses the reaction H2O2 + AH2 = A + 2 H2O. Its function is as follows. Monomeric heme protein which primary function is to store oxygen and facilitate its diffusion within muscle tissues. Reversibly binds oxygen through a pentacoordinated heme iron and enables its timely and efficient release as needed during periods of heightened demand. Depending on the oxidative conditions of tissues and cells, and in addition to its ability to bind oxygen, it also has a nitrite reductase activity whereby it regulates the production of bioactive nitric oxide. Under stress conditions, like hypoxia and anoxia, it also protects cells against reactive oxygen species thanks to its pseudoperoxidase activity. The protein is Myoglobin (MB) of Phocoenoides dalli dalli (Dall's porpoise).